Here is a 271-residue protein sequence, read N- to C-terminus: Glutamate racemase (271 aa).

Substrate is bound by residues 12–13 and 44–45; these read DS and YG. Cys75 serves as the catalytic Proton donor/acceptor. Position 76-77 (76-77) interacts with substrate; that stretch reads NT. Cys185 (proton donor/acceptor) is an active-site residue. 186 to 187 is a binding site for substrate; the sequence is TH.

This sequence belongs to the aspartate/glutamate racemases family.

It carries out the reaction L-glutamate = D-glutamate. It participates in cell wall biogenesis; peptidoglycan biosynthesis. In terms of biological role, provides the (R)-glutamate required for cell wall biosynthesis. In Methylococcus capsulatus (strain ATCC 33009 / NCIMB 11132 / Bath), this protein is Glutamate racemase.